Reading from the N-terminus, the 693-residue chain is Elongation factor G (693 aa).

Residues 8-283 enclose the tr-type G domain; sequence NRIRNIGIAA…AVIDYLPAPT (276 aa). Residues 17–24, 81–85, and 135–138 each bind GTP; these read AHIDAGKT, DTPGH, and NKMD.

The protein belongs to the TRAFAC class translation factor GTPase superfamily. Classic translation factor GTPase family. EF-G/EF-2 subfamily.

Its subcellular location is the cytoplasm. Its function is as follows. Catalyzes the GTP-dependent ribosomal translocation step during translation elongation. During this step, the ribosome changes from the pre-translocational (PRE) to the post-translocational (POST) state as the newly formed A-site-bound peptidyl-tRNA and P-site-bound deacylated tRNA move to the P and E sites, respectively. Catalyzes the coordinated movement of the two tRNA molecules, the mRNA and conformational changes in the ribosome. This chain is Elongation factor G, found in Wolinella succinogenes (strain ATCC 29543 / DSM 1740 / CCUG 13145 / JCM 31913 / LMG 7466 / NCTC 11488 / FDC 602W) (Vibrio succinogenes).